The sequence spans 250 residues: Uracil-DNA glycosylase (250 aa).

Residue Asp78 is the Proton acceptor of the active site. Residues 228–250 (RGQKPVDWSGEQNNASRQGEFAL) form a disordered region.

It belongs to the uracil-DNA glycosylase (UDG) superfamily. UNG family.

It is found in the cytoplasm. The catalysed reaction is Hydrolyzes single-stranded DNA or mismatched double-stranded DNA and polynucleotides, releasing free uracil.. In terms of biological role, excises uracil residues from the DNA which can arise as a result of misincorporation of dUMP residues by DNA polymerase or due to deamination of cytosine. This is Uracil-DNA glycosylase from Bordetella parapertussis (strain 12822 / ATCC BAA-587 / NCTC 13253).